Consider the following 340-residue polypeptide: Phospho-N-acetylmuramoyl-pentapeptide-transferase (340 aa).

A run of 10 helical transmembrane segments spans residues 5–25 (FILS…HLIN), 50–70 (TPTM…IIWT), 73–93 (SNPY…IGFI), 113–133 (FSLL…IIND), 147–167 (IIFN…IGTS), 178–198 (GLAI…SFIS), 218–238 (LTII…FNTY), 242–262 (IFMG…ISVL), 267–287 (ILLI…IIQV), and 318–338 (IIRF…MLKV).

Belongs to the glycosyltransferase 4 family. MraY subfamily. Mg(2+) serves as cofactor.

The protein resides in the cell membrane. The enzyme catalyses UDP-N-acetyl-alpha-D-muramoyl-L-alanyl-gamma-D-glutamyl-meso-2,6-diaminopimeloyl-D-alanyl-D-alanine + di-trans,octa-cis-undecaprenyl phosphate = di-trans,octa-cis-undecaprenyl diphospho-N-acetyl-alpha-D-muramoyl-L-alanyl-D-glutamyl-meso-2,6-diaminopimeloyl-D-alanyl-D-alanine + UMP. Its pathway is cell wall biogenesis; peptidoglycan biosynthesis. Functionally, catalyzes the initial step of the lipid cycle reactions in the biosynthesis of the cell wall peptidoglycan: transfers peptidoglycan precursor phospho-MurNAc-pentapeptide from UDP-MurNAc-pentapeptide onto the lipid carrier undecaprenyl phosphate, yielding undecaprenyl-pyrophosphoryl-MurNAc-pentapeptide, known as lipid I. This chain is Phospho-N-acetylmuramoyl-pentapeptide-transferase, found in Buchnera aphidicola subsp. Baizongia pistaciae (strain Bp).